The following is a 705-amino-acid chain: Elongation factor G (705 aa).

Residues 8 to 290 enclose the tr-type G domain; the sequence is ERYRNFGIMA…GVVHLLPSPA (283 aa). GTP contacts are provided by residues 17–24, 88–92, and 142–145; these read AHIDAGKT, DTPGH, and NKMD. The segment at 290–309 is disordered; it reads ADRPPVQGIDENEKEDTRDA.

It belongs to the TRAFAC class translation factor GTPase superfamily. Classic translation factor GTPase family. EF-G/EF-2 subfamily.

It is found in the cytoplasm. In terms of biological role, catalyzes the GTP-dependent ribosomal translocation step during translation elongation. During this step, the ribosome changes from the pre-translocational (PRE) to the post-translocational (POST) state as the newly formed A-site-bound peptidyl-tRNA and P-site-bound deacylated tRNA move to the P and E sites, respectively. Catalyzes the coordinated movement of the two tRNA molecules, the mRNA and conformational changes in the ribosome. The chain is Elongation factor G from Xanthomonas campestris pv. campestris (strain 8004).